The primary structure comprises 261 residues: Thiamine thiazole synthase (261 aa).

NAD(+)-binding positions include Ser40, 59–60 (ER), Gly67, Val133, and 159–161 (HVD). 2 residues coordinate Fe cation: Asp161 and His176. NAD(+) is bound by residues Ser179 and Met226. Position 236 (Arg236) interacts with glycine.

The protein belongs to the THI4 family. As to quaternary structure, homooctamer; tetramer of dimers. It depends on Fe(2+) as a cofactor.

It catalyses the reaction hydrogen sulfide + glycine + NAD(+) = ADP-5-ethyl-4-methylthiazole-2-carboxylate + nicotinamide + 3 H2O + H(+). Its pathway is cofactor biosynthesis; thiamine diphosphate biosynthesis. Involved in the biosynthesis of the thiazole moiety of thiamine. Catalyzes the conversion of NAD and glycine to adenosine diphosphate 5-(2-hydroxyethyl)-4-methylthiazole-2-carboxylate (ADT), an adenylated thiazole intermediate, using free sulfide as a source of sulfur. In Methanococcus vannielii (strain ATCC 35089 / DSM 1224 / JCM 13029 / OCM 148 / SB), this protein is Thiamine thiazole synthase.